An 89-amino-acid chain; its full sequence is Small ribosomal subunit protein uS15c (89 aa).

The protein belongs to the universal ribosomal protein uS15 family. In terms of assembly, part of the 30S ribosomal subunit.

Its subcellular location is the plastid. The protein localises to the organellar chromatophore. In Paulinella chromatophora, this protein is Small ribosomal subunit protein uS15c (rps15).